We begin with the raw amino-acid sequence, 540 residues long: Cytochrome P450 monooxygenase ORF5 (540 aa).

Residues tyrosine 48–alanine 68 traverse the membrane as a helical segment. N-linked (GlcNAc...) asparagine glycans are attached at residues asparagine 376 and asparagine 460. Cysteine 483 lines the heme pocket.

It belongs to the cytochrome P450 family. Heme serves as cofactor.

Its subcellular location is the membrane. Its pathway is sesquiterpene biosynthesis. Its function is as follows. Cytochrome P450 monooxygenase; part of the gene cluster that mediates the biosynthesis of PR-toxin, a bicyclic sesquiterpene belonging to the eremophilane class and acting as a mycotoxin. The first step of the pathway is catalyzed by the aristolochene synthase which performs the cyclization of trans,trans-farnesyl diphosphate (FPP) to the bicyclic sesquiterpene aristolochene. Following the formation of aristolochene, the non-oxygenated aristolochene is converted to the trioxygenated intermediate eremofortin B, via 7-epi-neopetasone. This conversion appears to involve three enzymes, a hydroxysterol oxidase-like enzyme, the quinone-oxidase prx3 that forms the quinone-type-structure in the bicyclic nucleus of aristolochene with the C8-oxo group and the C-3 hydroxyl group, and the P450 monooxygenase ORF6 that introduces the epoxide at the double bond between carbons 1 and 2. No monoxy or dioxy-intermediates have been reported to be released to the broth, so these three early oxidative reactions may be coupled together. Eremofortin B is further oxidized by another P450 monooxygenase, that introduces a second epoxide between carbons 7 and 11 prior to acetylation to eremofortin A by the acetyltransferase ORF8. The second epoxidation may be performed by a second P450 monooxygenase. After the acetylation step, eremofortin A is converted to eremofortin C and then to PR-toxin. First the conversion of eremofortin A to eremofortin C proceeds by oxidation of the side chain of the molecule at C-12 and is catalyzed by the short-chain oxidoreductase prx1. The cytochrome P450 monooxygenase ORF6 is probably also involved in this step. The primary alcohol formed at C-12 is finally oxidized by the short-chain alcohol dehydrogenase prx4 that forms PR-toxin. The protein is Cytochrome P450 monooxygenase ORF5 of Penicillium roqueforti (strain FM164).